The chain runs to 122 residues: MSKALLRFVRLSPTKARLIARQIQGMNAELAIASLEFTPNKAARVLSKVVASAVANGSLDAKSTLIVSCRVDAGPVLRRSIPRAKGRATAIRKPTSHVFVEVAEGKEMKSSKSHKKNQAEGK.

Positions 102 to 122 (VAEGKEMKSSKSHKKNQAEGK) are disordered.

The protein belongs to the universal ribosomal protein uL22 family. Part of the 50S ribosomal subunit.

This protein binds specifically to 23S rRNA; its binding is stimulated by other ribosomal proteins, e.g. L4, L17, and L20. It is important during the early stages of 50S assembly. It makes multiple contacts with different domains of the 23S rRNA in the assembled 50S subunit and ribosome. Functionally, the globular domain of the protein is located near the polypeptide exit tunnel on the outside of the subunit, while an extended beta-hairpin is found that lines the wall of the exit tunnel in the center of the 70S ribosome. This is Large ribosomal subunit protein uL22 from Helicobacter pylori (strain G27).